A 121-amino-acid polypeptide reads, in one-letter code: Small ribosomal subunit protein uS13 (121 aa).

The disordered stretch occupies residues 91–121 (HRKGLPMRGQRTRTNARTRKGPRKAGVALKK).

It belongs to the universal ribosomal protein uS13 family. In terms of assembly, part of the 30S ribosomal subunit. Forms a loose heterodimer with protein S19. Forms two bridges to the 50S subunit in the 70S ribosome.

Its function is as follows. Located at the top of the head of the 30S subunit, it contacts several helices of the 16S rRNA. In the 70S ribosome it contacts the 23S rRNA (bridge B1a) and protein L5 of the 50S subunit (bridge B1b), connecting the 2 subunits; these bridges are implicated in subunit movement. Contacts the tRNAs in the A and P-sites. This is Small ribosomal subunit protein uS13 from Cupriavidus taiwanensis (strain DSM 17343 / BCRC 17206 / CCUG 44338 / CIP 107171 / LMG 19424 / R1) (Ralstonia taiwanensis (strain LMG 19424)).